The sequence spans 453 residues: Glutamyl-tRNA reductase (453 aa).

Residues Thr-52–Arg-55, Ser-105, Glu-110–Gln-112, and Gln-116 each bind substrate. The active-site Nucleophile is Cys-53. Residue Gly-184 to Ala-189 coordinates NADP(+). Low complexity predominate over residues Pro-413–Thr-424. Residues Pro-413–Asp-453 form a disordered region.

The protein belongs to the glutamyl-tRNA reductase family. Homodimer.

It catalyses the reaction (S)-4-amino-5-oxopentanoate + tRNA(Glu) + NADP(+) = L-glutamyl-tRNA(Glu) + NADPH + H(+). The protein operates within porphyrin-containing compound metabolism; protoporphyrin-IX biosynthesis; 5-aminolevulinate from L-glutamyl-tRNA(Glu): step 1/2. Catalyzes the NADPH-dependent reduction of glutamyl-tRNA(Glu) to glutamate 1-semialdehyde (GSA). The chain is Glutamyl-tRNA reductase from Natronomonas pharaonis (strain ATCC 35678 / DSM 2160 / CIP 103997 / JCM 8858 / NBRC 14720 / NCIMB 2260 / Gabara) (Halobacterium pharaonis).